Consider the following 371-residue polypeptide: Phospho-N-acetylmuramoyl-pentapeptide-transferase (371 aa).

Transmembrane regions (helical) follow at residues 19 to 39, 48 to 68, 95 to 115, 119 to 139, 155 to 175, 180 to 200, 227 to 247, 284 to 304, and 349 to 369; these read LYWL…IYSG, IVAP…WAVP, TMGG…WVAA, NLLE…VGWF, AKLR…WLFL, ISGL…FLAI, AIAF…LMIF, AVGL…LFLV, and VVST…GLNA.

The protein belongs to the glycosyltransferase 4 family. MraY subfamily. The cofactor is Mg(2+).

Its subcellular location is the cell inner membrane. The enzyme catalyses UDP-N-acetyl-alpha-D-muramoyl-L-alanyl-gamma-D-glutamyl-meso-2,6-diaminopimeloyl-D-alanyl-D-alanine + di-trans,octa-cis-undecaprenyl phosphate = di-trans,octa-cis-undecaprenyl diphospho-N-acetyl-alpha-D-muramoyl-L-alanyl-D-glutamyl-meso-2,6-diaminopimeloyl-D-alanyl-D-alanine + UMP. The protein operates within cell wall biogenesis; peptidoglycan biosynthesis. Its function is as follows. Catalyzes the initial step of the lipid cycle reactions in the biosynthesis of the cell wall peptidoglycan: transfers peptidoglycan precursor phospho-MurNAc-pentapeptide from UDP-MurNAc-pentapeptide onto the lipid carrier undecaprenyl phosphate, yielding undecaprenyl-pyrophosphoryl-MurNAc-pentapeptide, known as lipid I. The polypeptide is Phospho-N-acetylmuramoyl-pentapeptide-transferase (Acaryochloris marina (strain MBIC 11017)).